The following is a 139-amino-acid chain: Nucleoside diphosphate kinase (139 aa).

6 residues coordinate ATP: Lys-10, Phe-58, Arg-86, Thr-92, Arg-103, and Asn-113. His-116 acts as the Pros-phosphohistidine intermediate in catalysis.

The protein belongs to the NDK family. As to quaternary structure, homotetramer. Mg(2+) serves as cofactor.

Its subcellular location is the cytoplasm. It carries out the reaction a 2'-deoxyribonucleoside 5'-diphosphate + ATP = a 2'-deoxyribonucleoside 5'-triphosphate + ADP. The catalysed reaction is a ribonucleoside 5'-diphosphate + ATP = a ribonucleoside 5'-triphosphate + ADP. Major role in the synthesis of nucleoside triphosphates other than ATP. The ATP gamma phosphate is transferred to the NDP beta phosphate via a ping-pong mechanism, using a phosphorylated active-site intermediate. This is Nucleoside diphosphate kinase from Caulobacter sp. (strain K31).